We begin with the raw amino-acid sequence, 128 residues long: ATP synthase epsilon chain (128 aa).

Belongs to the ATPase epsilon chain family. In terms of assembly, F-type ATPases have 2 components, CF(1) - the catalytic core - and CF(0) - the membrane proton channel. CF(1) has five subunits: alpha(3), beta(3), gamma(1), delta(1), epsilon(1). CF(0) has three main subunits: a, b and c.

The protein resides in the cell inner membrane. In terms of biological role, produces ATP from ADP in the presence of a proton gradient across the membrane. This is ATP synthase epsilon chain from Sulfurovum sp. (strain NBC37-1).